The chain runs to 179 residues: Protein GrpE (179 aa).

The protein belongs to the GrpE family. Homodimer.

It localises to the cytoplasm. Its function is as follows. Participates actively in the response to hyperosmotic and heat shock by preventing the aggregation of stress-denatured proteins, in association with DnaK and GrpE. It is the nucleotide exchange factor for DnaK and may function as a thermosensor. Unfolded proteins bind initially to DnaJ; upon interaction with the DnaJ-bound protein, DnaK hydrolyzes its bound ATP, resulting in the formation of a stable complex. GrpE releases ADP from DnaK; ATP binding to DnaK triggers the release of the substrate protein, thus completing the reaction cycle. Several rounds of ATP-dependent interactions between DnaJ, DnaK and GrpE are required for fully efficient folding. This chain is Protein GrpE, found in Rickettsia felis (strain ATCC VR-1525 / URRWXCal2) (Rickettsia azadi).